The sequence spans 485 residues: Cytoplasmic tRNA 2-thiolation protein 2 (485 aa).

Belongs to the CTU2/NCS2 family.

The protein localises to the cytoplasm. It participates in tRNA modification; 5-methoxycarbonylmethyl-2-thiouridine-tRNA biosynthesis. Functionally, plays a central role in 2-thiolation of mcm(5)S(2)U at tRNA wobble positions of tRNA(Lys), tRNA(Glu) and tRNA(Gln). May act by forming a heterodimer with NCS6 that ligates sulfur from thiocarboxylated URM1 onto the uridine of tRNAs at wobble position. Prior mcm(5) tRNA modification by the elongator complex is required for 2-thiolation. May also be involved in protein urmylation. The sequence is that of Cytoplasmic tRNA 2-thiolation protein 2 from Vanderwaltozyma polyspora (strain ATCC 22028 / DSM 70294 / BCRC 21397 / CBS 2163 / NBRC 10782 / NRRL Y-8283 / UCD 57-17) (Kluyveromyces polysporus).